The following is a 215-amino-acid chain: Jasmonate monooxygenase ABM (215 aa).

Positions 2–90 (FAVIFETRPQ…GVLEDYHLRV (89 aa)) constitute an ABM domain.

The protein localises to the endoplasmic reticulum. Its subcellular location is the secreted. It carries out the reaction jasmonate + NADPH + O2 + H(+) = (1R,2R)-12-hydroxyjasmonate + NADP(+) + H2O. Functionally, monooxygenase that converts the endogenous (and likely the host) jasmonate (JA) to its hydroxylated derivative 12-hydroxyjasmonate (12OH-JA), also known as tuberonic acid, a compound that attenuates or disables jasmonate-based host innate immunity and which is essential for proper initiation and elaboration of the blast disease in rice. ABM, together with a polyketide synthase MGG_04775 and the esterase MGG_04774, share the secondary metabolism gene cluster with ABC transporter ABC3, and therefore may also be involved in the synthesis of other important metabolites such as the ABC3 transporter efflux substrate (ATS) and/or additional polyketides. This Pyricularia oryzae (strain 70-15 / ATCC MYA-4617 / FGSC 8958) (Rice blast fungus) protein is Jasmonate monooxygenase ABM.